The primary structure comprises 575 residues: Alpha-(1,6)-fucosyltransferase (575 aa).

Residues 1–9 lie on the Cytoplasmic side of the membrane; that stretch reads MRAWTGSWR. Residues 10 to 30 form a helical; Signal-anchor for type II membrane protein membrane-spanning segment; the sequence is WIMLILFAWGTLLFYIGGHLV. Residues 31–575 are Lumenal-facing; sequence RDNDHPDHSS…KYPTYPEAEK (545 aa). 3 disulfides stabilise this stretch: cysteine 204/cysteine 266, cysteine 212/cysteine 230, and cysteine 218/cysteine 222. The GT23 domain occupies 206 to 493; sequence KARKLVCNIN…PDASANFHSL (288 aa). Serine 278 is modified (phosphoserine). The SH3-binding signature appears at 299–305; it reads PRPPYLP. Residues 365–366 are important for donor substrate binding; sequence RR. An intrachain disulfide couples cysteine 465 to cysteine 472. The 62-residue stretch at 502 to 563 folds into the SH3 domain; sequence QNAHNQIAVY…PSYKVREKIE (62 aa).

It belongs to the glycosyltransferase 23 family. In terms of processing, tyrosine phosphorylated by PKDCC/VLK.

The protein resides in the golgi apparatus. The protein localises to the golgi stack membrane. The catalysed reaction is N(4)-{beta-D-GlcNAc-(1-&gt;2)-alpha-D-Man-(1-&gt;3)-[beta-D-GlcNAc-(1-&gt;2)-alpha-D-Man-(1-&gt;6)]-beta-D-Man-(1-&gt;4)-beta-D-GlcNAc-(1-&gt;4)-beta-D-GlcNAc}-L-asparaginyl-[protein] + GDP-beta-L-fucose = an N(4)-{beta-D-GlcNAc-(1-&gt;2)-alpha-D-Man-(1-&gt;3)-[beta-D-GlcNAc-(1-&gt;2)-alpha-D-Man-(1-&gt;6)]-beta-D-Man-(1-&gt;4)-beta-D-GlcNAc-(1-&gt;4)-[alpha-L-Fuc-(1-&gt;6)]-beta-D-GlcNAc}-L-asparaginyl-[protein] + GDP + H(+). The protein operates within protein modification; protein glycosylation. In terms of biological role, catalyzes the addition of fucose in alpha 1-6 linkage to the first GlcNAc residue, next to the peptide chains in N-glycans. This Mus musculus (Mouse) protein is Alpha-(1,6)-fucosyltransferase (Fut8).